The sequence spans 92 residues: Small ribosomal subunit protein uS19 (92 aa).

It belongs to the universal ribosomal protein uS19 family.

Protein S19 forms a complex with S13 that binds strongly to the 16S ribosomal RNA. The chain is Small ribosomal subunit protein uS19 from Lachnoclostridium phytofermentans (strain ATCC 700394 / DSM 18823 / ISDg) (Clostridium phytofermentans).